The primary structure comprises 340 residues: UDP-N-acetylenolpyruvoylglucosamine reductase (340 aa).

In terms of domain architecture, FAD-binding PCMH-type spans 11–181 (ISVKAKKIIS…VAIGLKLKKK (171 aa)). Arginine 156 is a catalytic residue. Serine 227 functions as the Proton donor in the catalytic mechanism. Glutamate 323 is a catalytic residue.

The protein belongs to the MurB family. FAD serves as cofactor.

It is found in the cytoplasm. It carries out the reaction UDP-N-acetyl-alpha-D-muramate + NADP(+) = UDP-N-acetyl-3-O-(1-carboxyvinyl)-alpha-D-glucosamine + NADPH + H(+). The protein operates within cell wall biogenesis; peptidoglycan biosynthesis. In terms of biological role, cell wall formation. This Wigglesworthia glossinidia brevipalpis protein is UDP-N-acetylenolpyruvoylglucosamine reductase.